The sequence spans 398 residues: Peptidyl-prolyl cis-trans isomerase D (398 aa).

Residues 21 to 185 enclose the PPIase cyclophilin-type domain; it reads FGSSPASRPG…EDVKIVDCGE (165 aa). TPR repeat units lie at residues 229-262, 282-323, and 335-368; these read GLAL…LQLH, TSIQ…PSTE, and AKAF…APED.

The protein belongs to the cyclophilin-type PPIase family. PPIase D subfamily.

The protein resides in the cytoplasm. It catalyses the reaction [protein]-peptidylproline (omega=180) = [protein]-peptidylproline (omega=0). Its function is as follows. PPIases accelerate the folding of proteins. It catalyzes the cis-trans isomerization of proline imidic peptide bonds in oligopeptides. The sequence is that of Peptidyl-prolyl cis-trans isomerase D (CPR6) from Mycosarcoma maydis (Corn smut fungus).